The following is a 1608-amino-acid chain: MDPESVGYCNNPDFLHKGSMDELYNISKLTDDIKPVEEKWKLVPAFMKCRGLVKQHIDSFNFFINVEMKKIVKANERLTAENDPSYFVRFTDINVGSPTSTEDNLDSVQLTPQRCRLRDMTYSAPIFVNIEYTRNKQIISKRDVHIGNIPIMLRSSNCVLSKKTPEQMAALGECPMDPGGYFIVRGQEKVILNHEQLSKNRIIIEMDSKGLPSASVTSSTHERKSRTGVTLKNEKLYLKHNTFGEDIPVAIVLKGMGVETDQEMAQLVGSDDVFLNAITPSLEECQKCGVHTAAQALDYLGSRIKVFRRPYGVQNKKTKSEEARDILAGVVLNHVPVRRYNFRLKVIYLSLMIRRIIMASKDKSCLDDKDYYGNKRIELSGQLISLLFEDCFKKFQSELKKSVDQAIAKANRAENLDLPKLIRTDTITNGFTHAISSGQWNLKRFRMERSGVSQVLSRLSYISCMGMMTRIQSQFEKTRKVAGPRSLQPSQWGMLCPSDTPEGEACLHPDTIITMSNGQQKPIRQLKDGDSIITLDPITMEAHSTRIYSHFIKSSSQYGKQLLKITTITGKEIICTNDHRFLTSNGNWKQSKDLLLNDKLFLISSSNQLEFNNNNNENNNENNNDIIEILNENQLINQGVVPIKIIQELKSIELLPLLNNNEKLITISRIIGSIDKIGSNKQNEPIIQYQFNLISDFDQFLKDLQYLGFINPIYKLNEEQQQQQQQKIDHQQQQQQQVEQQQKSIIIDFIGSSFGYFIQSLLNEKNWIEKSNNQFVKKEFLSSFISNVNRIQFNIIEEINQQNNDSNFKILLNYKQQKQQQNEKEERAVVDHDNEIFNIKSLQILLNQFNVISSIDFEESNLIIINSSLKKFIDLINIKFNQKLNNQIIQIREYLNYINYNNNNNNNEEINIKKKDFGYFKKLKIKRNSFEIEIEKIEQLNYQDCPEISDFTTESDYHSMISNGFVSHNCGLVKNFALMSHVTTDDSEGPLLRLAYNLGVQDILLVTGEELNSRNAYLVLLNGQIIGIHNSPDYFVTTLRKMRRAGRIREFVSICKNKAQQTISVACDGGRLCRPVIIVDDQRPRLTQEHIEDLKDGLRTFDDFIREGIIEYLDVNEENDSFLAWREAAIQPWTTHLEIEPFTMLGCVAGLIPYPHHNQSPRNTYQCAMGKQAIGAIAYNQLTRIDTLLYLLVHTQRPLCQTRTIDLLNWYKLPAGHNATVAVMSYSGYDIEDALVMNKASLDRGFGRCIVLKKQVTSIKKHGNDTSDRIFPPTPNDLRQPKYGLLDSDGIAKPGELAQKGQILVNKYSPLNTIDATPNPELIPDSAYKSSYMGYKYDNPAFIDKVLLTSGDDEQLLIKMLMRSTRRPELGDKFSSRHGQKGVCGIIVKQEDMPFSDLGICPDIIMNPHGFPSRMTIGKMIELLAGKAGVLSGKFGFGTCFGGDRVENISKVLISKGFSYGGKDYVTSGVTGEPLACFIFFGPIFYQKLKHMVMDKMHARARGPTVTLTRQPTEGRARGGGLRLGEMERDCLIGYGASALIMERLMISSDRFTVYACKNCGFLGYEGYCQYCKSSVDISTIQIPYACKLLFQELQAMNIVPRLKLVDS.

Zn(2+)-binding residues include C1557, C1560, C1569, and C1572. A C4-type zinc finger spans residues 1557-1572 (CKNCGFLGYEGYCQYC).

It belongs to the RNA polymerase beta chain family. Component of the RNA polymerase III (Pol III) complex. This protein undergoes a protein self splicing that involves a post-translational excision of the intervening region (intein) followed by peptide ligation.

Its subcellular location is the nucleus. It carries out the reaction RNA(n) + a ribonucleoside 5'-triphosphate = RNA(n+1) + diphosphate. In terms of biological role, DNA-dependent RNA polymerase catalyzes the transcription of DNA into RNA using the four ribonucleoside triphosphates as substrates. Second largest core component of RNA polymerase III which synthesizes small RNAs, such as 5S rRNA and tRNAs. Proposed to contribute to the polymerase catalytic activity and forms the polymerase active center together with the largest subunit. Pol III is composed of mobile elements and rpc2 is part of the core element with the central large cleft and probably a clamp element that moves to open and close the cleft. The sequence is that of DNA-directed RNA polymerase III subunit rpc2 (polr3b) from Dictyostelium discoideum (Social amoeba).